A 542-amino-acid chain; its full sequence is Chaperonin GroEL (542 aa).

ATP contacts are provided by residues 29-32 (TLGP), 86-90 (DGTTT), Gly-413, 476-478 (NAA), and Asp-492. Residues 523 to 542 (EPAAPAMPGGMDPSMMGGMM) are disordered. Residues 526–542 (APAMPGGMDPSMMGGMM) show a composition bias toward low complexity.

Belongs to the chaperonin (HSP60) family. Forms a cylinder of 14 subunits composed of two heptameric rings stacked back-to-back. Interacts with the co-chaperonin GroES.

It is found in the cytoplasm. It catalyses the reaction ATP + H2O + a folded polypeptide = ADP + phosphate + an unfolded polypeptide.. Together with its co-chaperonin GroES, plays an essential role in assisting protein folding. The GroEL-GroES system forms a nano-cage that allows encapsulation of the non-native substrate proteins and provides a physical environment optimized to promote and accelerate protein folding. This Streptococcus uberis (strain ATCC BAA-854 / 0140J) protein is Chaperonin GroEL.